We begin with the raw amino-acid sequence, 277 residues long: tRNA pseudouridine synthase A (277 aa).

The Nucleophile role is filled by Asp57. Tyr115 lines the substrate pocket.

It belongs to the tRNA pseudouridine synthase TruA family. In terms of assembly, homodimer.

The catalysed reaction is uridine(38/39/40) in tRNA = pseudouridine(38/39/40) in tRNA. Formation of pseudouridine at positions 38, 39 and 40 in the anticodon stem and loop of transfer RNAs. This chain is tRNA pseudouridine synthase A, found in Nitratidesulfovibrio vulgaris (strain DSM 19637 / Miyazaki F) (Desulfovibrio vulgaris).